The following is a 350-amino-acid chain: Glutamyl-tRNA reductase (350 aa).

Substrate is bound by residues 53–56, S105, 110–112, and Q116; these read TCNR and ETQ. The Nucleophile role is filled by C54. 185-190 lines the NADP(+) pocket; that stretch reads GAGETA.

Belongs to the glutamyl-tRNA reductase family. Homodimer.

It carries out the reaction (S)-4-amino-5-oxopentanoate + tRNA(Glu) + NADP(+) = L-glutamyl-tRNA(Glu) + NADPH + H(+). It functions in the pathway porphyrin-containing compound metabolism; protoporphyrin-IX biosynthesis; 5-aminolevulinate from L-glutamyl-tRNA(Glu): step 1/2. Catalyzes the NADPH-dependent reduction of glutamyl-tRNA(Glu) to glutamate 1-semialdehyde (GSA). This chain is Glutamyl-tRNA reductase, found in Deinococcus radiodurans (strain ATCC 13939 / DSM 20539 / JCM 16871 / CCUG 27074 / LMG 4051 / NBRC 15346 / NCIMB 9279 / VKM B-1422 / R1).